The chain runs to 131 residues: Insulin-like 3 (131 aa).

Positions methionine 1–alanine 24 are cleaved as a signal peptide. 3 disulfide bridges follow: cysteine 34-cysteine 117, cysteine 46-cysteine 130, and cysteine 116-cysteine 121. Residues proline 58 to histidine 104 constitute a propeptide, c peptide like. Residues alanine 86–arginine 105 are disordered.

Belongs to the insulin family. Heterodimer of a B chain and an A chain linked by two disulfide bonds. As to expression, highest expression in the Leydig cells of the testis.

It is found in the secreted. Seems to play a role in testicular function. May be a trophic hormone with a role in testicular descent in fetal life. Is a ligand for LGR8 receptor. The sequence is that of Insulin-like 3 (INSL3) from Callithrix jacchus (White-tufted-ear marmoset).